Consider the following 287-residue polypeptide: 2-dehydro-3-deoxyphosphooctonate aldolase (287 aa).

The protein belongs to the KdsA family.

It is found in the cytoplasm. The enzyme catalyses D-arabinose 5-phosphate + phosphoenolpyruvate + H2O = 3-deoxy-alpha-D-manno-2-octulosonate-8-phosphate + phosphate. It participates in carbohydrate biosynthesis; 3-deoxy-D-manno-octulosonate biosynthesis; 3-deoxy-D-manno-octulosonate from D-ribulose 5-phosphate: step 2/3. The protein operates within bacterial outer membrane biogenesis; lipopolysaccharide biosynthesis. The protein is 2-dehydro-3-deoxyphosphooctonate aldolase of Bradyrhizobium sp. (strain ORS 278).